The sequence spans 593 residues: Progranulin (593 aa).

The signal sequence occupies residues 1–17; that stretch reads MWTLVSWVALTAGLVAG. A glycan (N-linked (GlcNAc...) asparagine) is linked at Asn-118. Disulfide bonds link Cys-126–Cys-139 and Cys-133–Cys-149. Residues Asn-236 and Asn-265 are each glycosylated (N-linked (GlcNAc...) asparagine). 10 disulfide bridges follow: Cys-284/Cys-296, Cys-290/Cys-306, Cys-297/Cys-314, Cys-307/Cys-321, Cys-315/Cys-328, Cys-322/Cys-335, Cys-366/Cys-378, Cys-372/Cys-388, Cys-397/Cys-410, and Cys-404/Cys-416. Residue Asn-368 is glycosylated (N-linked (GlcNAc...) asparagine). An N-linked (GlcNAc...) asparagine glycan is attached at Asn-530.

The protein belongs to the granulin family. As to quaternary structure, progranulin is secreted as a homodimer. Interacts with SLPI; interaction protects progranulin from proteolysis. Interacts (via region corresponding to granulin-7 peptide) with CTSD; stabilizes CTSD and increases its proteolytic activity. Interacts (via region corresponding to granulin-7 peptide) with SORT1; this interaction mediates endocytosis and lysosome delivery of progranulin; interaction occurs at the neuronal cell surface in a stressed nervous system. Interacts with PSAP; facilitates lysosomal delivery of progranulin from the extracellular space and the biosynthetic pathway. Forms a complex with PSAP and M6PR; PSAP bridges the binding between progranulin and M6PR. Forms a complex with PSAP and SORT1; progranulin bridges the interaction between PSAP and SORT1; facilitates lysosomal targeting of PSAP via SORT1; interaction enhances PSAP uptake in primary cortical neurons. Interacts (via regions corresponding to granulin-2 and granulin-7 peptides) with GBA1; this interaction prevents aggregation of GBA1-SCARB2 complex via interaction with HSPA1A upon stress. Interacts (via region corresponding to granulin-7 peptide) with HSPA1A; mediates recruitment of HSPA1A to GBA1 and prevents GBA1 aggregation in response to stress. Cleaved by ELANE; proteolysis is blocked by SLPI and is concentration- and time-dependent and induces CXCL8/IL-8 production; granulin-3 and granulin-4 are resistant to ELANE. Cleaved by CTSL in lysosome thus regulating the maturation and turnover of progranulin within the lysosome. In myelogenous leukemic cell lines of promonocytic, promyelocytic, and proerythroid lineage, in fibroblasts, and very strongly in epithelial cell lines. Present in inflammatory cells and bone marrow. Highest levels in kidney.

It localises to the secreted. The protein localises to the lysosome. Its function is as follows. Secreted protein that acts as a key regulator of lysosomal function and as a growth factor involved in inflammation, wound healing and cell proliferation. Regulates protein trafficking to lysosomes, and also the activity of lysosomal enzymes. Also facilitates the acidification of lysosomes, causing degradation of mature CTSD by CTSB. In addition, functions as a wound-related growth factor that acts directly on dermal fibroblasts and endothelial cells to promote division, migration and the formation of capillary-like tubule structures. Also promotes epithelial cell proliferation by blocking TNF-mediated neutrophil activation preventing release of oxidants and proteases. Moreover, modulates inflammation in neurons by preserving neurons survival, axonal outgrowth and neuronal integrity. Functionally, promotes proliferation of the epithelial cell line A431 in culture. Inhibits epithelial cell proliferation and induces epithelial cells to secrete IL-8. In terms of biological role, stabilizes CTSD through interaction with CTSD leading to maintain its aspartic-type peptidase activity. The protein is Progranulin of Homo sapiens (Human).